The primary structure comprises 78 residues: Consomatin Te1 (78 aa).

The first 22 residues, Met1–Gly22, serve as a signal peptide directing secretion. A propeptide spanning residues Gly23–Arg56 is cleaved from the precursor. A disulfide bridge connects residues Cys63 and Cys68. Trp65 carries the post-translational modification D-tryptophan. 3 positions are modified to 4-hydroxyproline: Pro69, Pro70, and Pro72. The propeptide occupies Arg74–Ser78.

This sequence belongs to the conotoxin C superfamily. Consomatin family. Expressed by the venom duct.

The protein resides in the secreted. Moderately activates human somatostatin receptors (SSTR) with a preferential activation of SSTR1 and SSTR4. In vivo, does not cause behavioral changes in mice within a few minutes of intracranial injection, but causes a progressive loss of movement thereafter. Four to five hours after injection, mice recover, even with the highest dose tested. Shows antinociception and antihyperalgesia activities in two mouse models of acute pain, most probably by acting outside the central nervous system. The protein is Consomatin Te1 of Conus terebra (Sea snail).